Reading from the N-terminus, the 196-residue chain is Pyridoxal 5'-phosphate synthase subunit PdxT (196 aa).

46–48 (GES) provides a ligand contact to L-glutamine. The active-site Nucleophile is the Cys78. L-glutamine contacts are provided by residues Arg110 and 138–139 (IR). Residues His174 and Glu176 each act as charge relay system in the active site.

It belongs to the glutaminase PdxT/SNO family. In the presence of PdxS, forms a dodecamer of heterodimers. Only shows activity in the heterodimer.

The enzyme catalyses aldehydo-D-ribose 5-phosphate + D-glyceraldehyde 3-phosphate + L-glutamine = pyridoxal 5'-phosphate + L-glutamate + phosphate + 3 H2O + H(+). It catalyses the reaction L-glutamine + H2O = L-glutamate + NH4(+). The protein operates within cofactor biosynthesis; pyridoxal 5'-phosphate biosynthesis. Catalyzes the hydrolysis of glutamine to glutamate and ammonia as part of the biosynthesis of pyridoxal 5'-phosphate. The resulting ammonia molecule is channeled to the active site of PdxS. This is Pyridoxal 5'-phosphate synthase subunit PdxT from Deinococcus radiodurans (strain ATCC 13939 / DSM 20539 / JCM 16871 / CCUG 27074 / LMG 4051 / NBRC 15346 / NCIMB 9279 / VKM B-1422 / R1).